The primary structure comprises 509 residues: Probable basic-leucine zipper transcription factor H (509 aa).

A disordered region spans residues 1 to 42 (MMNSPRSLDSSDGSVDSSSVYSGTSSFGSSFTSSTGSGFTNS). A compositionally biased stretch (low complexity) spans 10 to 39 (SSDGSVDSSSVYSGTSSFGSSFTSSTGSGF). Residues 50–113 (AKKKKIRQMQ…NENYLKINQL (64 aa)) form the bZIP domain. The interval 51 to 77 (KKKKIRQMQNRQSAAQYRERKKEYLEK) is basic motif. The interval 78–99 (LETIVDNLESDRNQLLQQTKQL) is leucine-zipper. Disordered stretches follow at residues 134-185 (LLSK…SNNG), 223-275 (FSHL…SRFN), 290-414 (IENV…IINN), and 465-509 (SNNN…GIPK). Composition is skewed to low complexity over residues 226–248 (LQQQ…SPIP), 255–269 (PIQQ…QNIN), 292–350 (NVNN…SNRS), 361–414 (QQQQ…IINN), 465–483 (SNNN…NSPS), and 490–509 (NGGI…GIPK).

The protein belongs to the bZIP family.

It localises to the nucleus. Its function is as follows. Probable transcriptional regulator. This Dictyostelium discoideum (Social amoeba) protein is Probable basic-leucine zipper transcription factor H (bzpH).